Here is a 502-residue protein sequence, read N- to C-terminus: Putative diacyglycerol O-acyltransferase Rv1760 (502 aa).

His174 acts as the Proton acceptor in catalysis.

Belongs to the long-chain O-acyltransferase family.

It catalyses the reaction an acyl-CoA + a 1,2-diacyl-sn-glycerol = a triacyl-sn-glycerol + CoA. The catalysed reaction is di-(9Z)-octadecenoylglycerol + (9Z)-octadecenoyl-CoA = 1,2,3-tri-(9Z-octadecenoyl)-glycerol + CoA. It functions in the pathway glycerolipid metabolism; triacylglycerol biosynthesis. In terms of biological role, catalyzes the terminal and only committed step in triacylglycerol synthesis by using diacylglycerol and fatty acyl CoA as substrates. Required for storage lipid synthesis. Functionally, upon expression in E.coli functions weakly as a triacylglycerol synthase, making triacylglycerol (TG) from diolein and long-chain fatty acyl-CoA. Has very weak wax synthase activity, incorporating palmityl alcohol into wax esters in the presence of palmitoyl-CoA. This Mycobacterium tuberculosis (strain ATCC 25618 / H37Rv) protein is Putative diacyglycerol O-acyltransferase Rv1760.